Here is a 369-residue protein sequence, read N- to C-terminus: Chaperone protein DnaJ (369 aa).

Residues 5 to 69 (DYYDVLGISK…NKKAQYDRFG (65 aa)) enclose the J domain. A CR-type zinc finger spans residues 131-213 (GTTKNVSVDI…CSGAGRVKAK (83 aa)). Residues Cys-144, Cys-147, Cys-161, Cys-164, Cys-187, Cys-190, Cys-201, and Cys-204 each contribute to the Zn(2+) site. CXXCXGXG motif repeat units lie at residues 144 to 151 (CGHCHGSG), 161 to 168 (CSKCHGQG), 187 to 194 (CPQCQGEG), and 201 to 208 (CHVCSGAG).

This sequence belongs to the DnaJ family. As to quaternary structure, homodimer. Requires Zn(2+) as cofactor.

It localises to the cytoplasm. Participates actively in the response to hyperosmotic and heat shock by preventing the aggregation of stress-denatured proteins and by disaggregating proteins, also in an autonomous, DnaK-independent fashion. Unfolded proteins bind initially to DnaJ; upon interaction with the DnaJ-bound protein, DnaK hydrolyzes its bound ATP, resulting in the formation of a stable complex. GrpE releases ADP from DnaK; ATP binding to DnaK triggers the release of the substrate protein, thus completing the reaction cycle. Several rounds of ATP-dependent interactions between DnaJ, DnaK and GrpE are required for fully efficient folding. Also involved, together with DnaK and GrpE, in the DNA replication of plasmids through activation of initiation proteins. This is Chaperone protein DnaJ from Acholeplasma laidlawii.